Reading from the N-terminus, the 571-residue chain is MRYSKLFIPTMREIPSGINAISHILMLKAGYVRQLAAGLFIFLPLGWRVLNKINMILKEEMERIGAQEISMPILHPAEIWQETGRWYTIKEEMFRLKDRTGRDMCLGMTHEEIMTWIASKEIKSYRQLPQIWYQIQTKLRDEARPRGGVLRTREFIMKDSYSFDIDWEGLDKSYNLHAEAYHRIFTKCGLKYYQVESDPGIMGDMESHEFMAPTPAGEDEIVLCDSCGYSANIEVAKSELPTLPSLNFEYKEIYTPEKKSVKEVSDFLGLSEKYFIKTLIVISEKNGPVLVMLRGDQELNEKKLARIIGEFSFATSEQALEILGVELGFVGPVGHKIKKIADFSIQKEISYISGANKKNYHLQGIIPGIHFDAQWADIRRVKEEDRCPKCGNSLKIEKAIEVGNIFKLGTKYTEPLHAYFLDKDGKEKPIIMGSYGIGPARVAAAAIEQNHDSDGIIWPKSISPFDIEIIPLNMDDEKTVSIAEELYEKVTEIYNSFADRHMEVLIDDRDERPGVKFKDADLIGIPIQIVIGKKGLKENKVEIKKRRTKETKKVSVNKAVVEIVNSYYETY.

This sequence belongs to the class-II aminoacyl-tRNA synthetase family. ProS type 1 subfamily. In terms of assembly, homodimer.

The protein resides in the cytoplasm. It carries out the reaction tRNA(Pro) + L-proline + ATP = L-prolyl-tRNA(Pro) + AMP + diphosphate. Functionally, catalyzes the attachment of proline to tRNA(Pro) in a two-step reaction: proline is first activated by ATP to form Pro-AMP and then transferred to the acceptor end of tRNA(Pro). As ProRS can inadvertently accommodate and process non-cognate amino acids such as alanine and cysteine, to avoid such errors it has two additional distinct editing activities against alanine. One activity is designated as 'pretransfer' editing and involves the tRNA(Pro)-independent hydrolysis of activated Ala-AMP. The other activity is designated 'posttransfer' editing and involves deacylation of mischarged Ala-tRNA(Pro). The misacylated Cys-tRNA(Pro) is not edited by ProRS. This chain is Proline--tRNA ligase, found in Thermodesulfovibrio yellowstonii (strain ATCC 51303 / DSM 11347 / YP87).